The following is a 460-amino-acid chain: Cysteine--tRNA ligase (460 aa).

A Zn(2+)-binding site is contributed by Cys28. Positions 30–40 (MTVYDYCHLGH) match the 'HIGH' region motif. Zn(2+)-binding residues include Cys209, His234, and Glu238. Residues 266–270 (KMSKS) carry the 'KMSKS' region motif. Lys269 is a binding site for ATP.

This sequence belongs to the class-I aminoacyl-tRNA synthetase family. As to quaternary structure, monomer. Zn(2+) is required as a cofactor.

It is found in the cytoplasm. It carries out the reaction tRNA(Cys) + L-cysteine + ATP = L-cysteinyl-tRNA(Cys) + AMP + diphosphate. The sequence is that of Cysteine--tRNA ligase from Pseudomonas aeruginosa (strain UCBPP-PA14).